The sequence spans 294 residues: Large ribosomal subunit protein uL2 (294 aa).

Disordered stretches follow at residues 1–37 (MGIR…RPEK) and 228–294 (GSVM…RAAQ). Residues 10-22 (TPSTRHMTVSNFE) are compositionally biased toward polar residues. The span at 23-37 (ELSRDENGKRPRPEK) shows a compositional bias: basic and acidic residues. Residues 264–285 (KTRKRNKPSNKFIVRGRRRGGR) are compositionally biased toward basic residues.

Belongs to the universal ribosomal protein uL2 family. As to quaternary structure, part of the 50S ribosomal subunit. Forms a bridge to the 30S subunit in the 70S ribosome.

Its function is as follows. One of the primary rRNA binding proteins. Required for association of the 30S and 50S subunits to form the 70S ribosome, for tRNA binding and peptide bond formation. It has been suggested to have peptidyltransferase activity; this is somewhat controversial. Makes several contacts with the 16S rRNA in the 70S ribosome. This chain is Large ribosomal subunit protein uL2, found in Synechococcus sp. (strain JA-3-3Ab) (Cyanobacteria bacterium Yellowstone A-Prime).